We begin with the raw amino-acid sequence, 705 residues long: MSSDTSQAVITTPPPPSMPHKERYFDRINESDPEYLRERNMSPDLRQDFNMMEQRKRVTQILQSPAFREDLECLIQEQMKKGHDPTGLLALQQIADYIMANSFTGFSSPPLSLGMVTPINDLPGADTSSYVKGEKLTRCKLASLYRLADLFGWAHLANTYISVRVSKEQDHIIIIPRGLSFSEATASALVKVNIIGEVVDQGSTNLKIDHSGFSPHAAIYSTRPDVKCVIHIHTLATAAVSSMKCGILPISQESLILGDVAYYDYQGSLDEEEERIELQKVLGPSCKVLVLRNHGVVALGETLEEAFHYIFNVQMACEIQVQAVAGAGGVDNLLILDLQKYKAFTHGVAMTGGGGVNMGSHQKWKVGEIEFEGLMRTLDNLGYRTGYAYRHPLVREKPRHKSDVEIPATVTAFSFEDDSVPLSPLKYMAQRQQREKTRWLNSPNTYMKVNVPEESRNGETSPRTKITWMKAEDPSKVSSGTPIKIEDPNQFVPLNTNPTEVLEKRNKIREQNRYDLKTAGPQSQLLAGIVVDKPPSTMRFEDDDQGPPAPPNPFSHLMEGELEEYTKTIERKQQGLDDAEQESLSDDAASVSQIQSQTQSPQSVPERLEENHELFSKSFTSVDVPVIVNGKDEMHDVEDELAQRVSRLTTSTTIENIEITIKSPDRTEEVLSPDGSPSKSPSKKKKKFRTPSFLKKNKKKEKVEA.

A compositionally biased stretch (polar residues) spans 1–10 (MSSDTSQAVI). Residues 1–22 (MSSDTSQAVITTPPPPSMPHKE) form a disordered region. Residue S2 is modified to N-acetylserine. S31, S42, S64, S402, S414, S423, S442, and S461 each carry phosphoserine. 4 disordered regions span residues 472–495 (EDPS…VPLN), 535–556 (PSTM…PFSH), 572–612 (KQQG…EENH), and 658–705 (EITI…KVEA). Residue K484 forms a Glycyl lysine isopeptide (Lys-Gly) (interchain with G-Cter in SUMO2) linkage. S583, S585, S590, S672, S676, S678, and S680 each carry phosphoserine. Residues 590 to 605 (SVSQIQSQTQSPQSVP) are compositionally biased toward low complexity. Basic residues predominate over residues 681 to 705 (PSKKKKKFRTPSFLKKNKKKEKVEA). A Phosphoserine; by PKC modification is found at S682. An interaction with calmodulin region spans residues 683–700 (KKKKKFRTPSFLKKNKKK).

This sequence belongs to the aldolase class II family. Adducin subfamily. Heterodimer of an alpha and a gamma subunit. In terms of processing, sumoylated. Post-translationally, proteolytically cleaved by asparagine endopeptidase (AEP) into 2 fragments. Overexpression of the 1-357 fragment induces neuronal apoptosis, and overexpression of either 1-357 or 358-706 fragment increases the degeneration of dendritic spines. Overexpression of the 1-357 fragment impairs neurite outgrowth by downregulating the expression of Rac2, and induces synaptic dysfunction and cognitive impairments in tau P301S transgenic mice, a mouse model for Alzheimer disease (AD). In terms of tissue distribution, expressed in kidney, brain, spleen, liver and heart. As to expression, expressed in renal interlobular arteries, afferent/efferent arterioles, parietal glomerular epithelial cells and microvilli of the luminal surface of the proximal tubule (at protein level). Expressed in podocytes (at protein level) Expressed in renal cortex (at protein level). Expressed in primary vascular smooth muscle cells (VSMCs) of the kidney (at protein level). Expressed in tubular cells and glomeruli (at protein level).

The protein resides in the cytoplasm. Its subcellular location is the cytoskeleton. It is found in the cell membrane. Membrane-cytoskeleton-associated protein that promotes the assembly of the spectrin-actin network. Plays a role in actin filament capping. Binds to calmodulin. Involved in myogenic reactivity of the renal afferent arteriole (Af-art), renal interlobular arteries and middle cerebral artery (MCA) to increased perfusion pressure. Involved in regulation of potassium channels in the vascular smooth muscle cells (VSMCs) of the Af-art and MCA ex vivo. Involved in regulation of glomerular capillary pressure, glomerular filtration rate (GFR) and glomerular nephrin expression in response to hypertension. Involved in renal blood flow (RBF) autoregulation. Plays a role in podocyte structure and function. Regulates globular monomer actin (G-actin) and filamentous polymer actin (F-actin) ratios in the primary podocytes affecting actin cytoskeleton organization. Regulates expression of synaptopodin, RhoA, Rac1 and CDC42 in the renal cortex and the primary podocytes. Regulates expression of nephrin in the glomeruli and in the primary podocytes, expression of nephrin and podocinin in the renal cortex, and expression of focal adhesion proteins integrin alpha-3 and integrin beta-1 in the glomeruli. Involved in cell migration and cell adhesion of podocytes, and in podocyte foot process effacement. Regulates expression of profibrotics markers MMP2, MMP9, TGF beta-1, tubular tight junction protein E-cadherin, and mesenchymal markers vimentin and alpha-SMA. Promotes the growth of neurites. The polypeptide is Gamma-adducin (Add3) (Rattus norvegicus (Rat)).